The following is a 455-amino-acid chain: Kynurenine 3-monooxygenase (455 aa).

It belongs to the aromatic-ring hydroxylase family. KMO subfamily. FAD is required as a cofactor.

It carries out the reaction L-kynurenine + NADPH + O2 + H(+) = 3-hydroxy-L-kynurenine + NADP(+) + H2O. It functions in the pathway cofactor biosynthesis; NAD(+) biosynthesis; quinolinate from L-kynurenine: step 1/3. In terms of biological role, catalyzes the hydroxylation of L-kynurenine (L-Kyn) to form 3-hydroxy-L-kynurenine (L-3OHKyn). Required for synthesis of quinolinic acid. The protein is Kynurenine 3-monooxygenase of Xanthomonas oryzae pv. oryzae (strain PXO99A).